A 238-amino-acid polypeptide reads, in one-letter code: Flagellar L-ring protein (238 aa).

Positions 1–23 (MIKLFICQKKYYLTAIFLLTIQS) are cleaved as a signal peptide. Cysteine 24 carries the N-palmitoyl cysteine lipid modification. A lipid anchor (S-diacylglycerol cysteine) is attached at cysteine 24.

The protein belongs to the FlgH family. In terms of assembly, the basal body constitutes a major portion of the flagellar organelle and consists of four rings (L,P,S, and M) mounted on a central rod.

The protein localises to the cell outer membrane. Its subcellular location is the bacterial flagellum basal body. Functionally, assembles around the rod to form the L-ring and probably protects the motor/basal body from shearing forces during rotation. In Buchnera aphidicola subsp. Acyrthosiphon pisum (strain 5A), this protein is Flagellar L-ring protein.